A 571-amino-acid polypeptide reads, in one-letter code: Sulfite reductase [NADPH] hemoprotein beta-component (571 aa).

[4Fe-4S] cluster is bound by residues cysteine 435, cysteine 441, cysteine 480, and cysteine 484. Cysteine 484 provides a ligand contact to siroheme.

It belongs to the nitrite and sulfite reductase 4Fe-4S domain family. As to quaternary structure, alpha(8)-beta(8). The alpha component is a flavoprotein, the beta component is a hemoprotein. Siroheme serves as cofactor. It depends on [4Fe-4S] cluster as a cofactor.

The catalysed reaction is hydrogen sulfide + 3 NADP(+) + 3 H2O = sulfite + 3 NADPH + 4 H(+). It functions in the pathway sulfur metabolism; hydrogen sulfide biosynthesis; hydrogen sulfide from sulfite (NADPH route): step 1/1. Component of the sulfite reductase complex that catalyzes the 6-electron reduction of sulfite to sulfide. This is one of several activities required for the biosynthesis of L-cysteine from sulfate. In Musicola paradisiaca (strain Ech703) (Dickeya paradisiaca), this protein is Sulfite reductase [NADPH] hemoprotein beta-component.